The following is a 603-amino-acid chain: Elongation factor 4 (603 aa).

A tr-type G domain is found at 7-191; it reads DNIRNFSIVA…AIVTRLPPPQ (185 aa). GTP contacts are provided by residues 19-24 and 138-141; these read DHGKST and NKVD.

The protein belongs to the TRAFAC class translation factor GTPase superfamily. Classic translation factor GTPase family. LepA subfamily.

Its subcellular location is the cell inner membrane. The enzyme catalyses GTP + H2O = GDP + phosphate + H(+). Functionally, required for accurate and efficient protein synthesis under certain stress conditions. May act as a fidelity factor of the translation reaction, by catalyzing a one-codon backward translocation of tRNAs on improperly translocated ribosomes. Back-translocation proceeds from a post-translocation (POST) complex to a pre-translocation (PRE) complex, thus giving elongation factor G a second chance to translocate the tRNAs correctly. Binds to ribosomes in a GTP-dependent manner. In Rhodopseudomonas palustris (strain HaA2), this protein is Elongation factor 4.